Reading from the N-terminus, the 179-residue chain is Large ribosomal subunit protein uL5 (179 aa).

This sequence belongs to the universal ribosomal protein uL5 family. As to quaternary structure, part of the 50S ribosomal subunit; part of the 5S rRNA/L5/L18/L25 subcomplex. Contacts the 5S rRNA and the P site tRNA. Forms a bridge to the 30S subunit in the 70S ribosome.

This is one of the proteins that bind and probably mediate the attachment of the 5S RNA into the large ribosomal subunit, where it forms part of the central protuberance. In the 70S ribosome it contacts protein S13 of the 30S subunit (bridge B1b), connecting the 2 subunits; this bridge is implicated in subunit movement. Contacts the P site tRNA; the 5S rRNA and some of its associated proteins might help stabilize positioning of ribosome-bound tRNAs. This chain is Large ribosomal subunit protein uL5, found in Shewanella amazonensis (strain ATCC BAA-1098 / SB2B).